A 378-amino-acid polypeptide reads, in one-letter code: Stimulator of interferon genes protein (378 aa).

Residues 1–17 lie on the Cytoplasmic side of the membrane; that stretch reads MPHSSLHPSIPQPRGLR. A mediates interaction with ZDHHC1 and ZDHHC11 region spans residues 1 to 190; sequence MPHSSLHPSI…IYNQFHNNTL (190 aa). Residues 18 to 34 form a helical membrane-spanning segment; the sequence is AQKAALVLLSACLVALW. The Lumenal portion of the chain corresponds to 35-44; the sequence is GLGEPPDYTL. A helical transmembrane segment spans residues 45 to 69; sequence KWLVLHLASQQMGLLIKGICSLAEE. Over 70-91 the chain is Cytoplasmic; sequence LCHVHSRYHGSYWRAVRACLCS. Cys-88 carries S-palmitoyl cysteine lipidation. The helical transmembrane segment at 92–106 threads the bilayer; sequence SMRCGALLLLSCYFY. At 107–116 the chain is on the lumenal side; the sequence is CSLPNMADLP. The helical transmembrane segment at 117-134 threads the bilayer; it reads FTWMLALLGLSQALNILL. Topologically, residues 135 to 378 are cytoplasmic; that stretch reads GLQGLAPAEV…KPLPLRSDVF (244 aa). A Glycyl lysine isopeptide (Lys-Gly) (interchain with G-Cter in ubiquitin) cross-link involves residue Lys-150. A cyclic dinucleotide-binding domain (CBD) region spans residues 153-339; it reads FNVAHGLAWS…LQHLRQEERE (187 aa). 2',3'-cGAMP contacts are provided by Ser-162 and Tyr-167. 2 residues coordinate 3',3'-c-di-GMP: Ser-162 and Tyr-167. Tyr-167 contacts 2',3'-cUAMP. Residue Lys-236 forms a Glycyl lysine isopeptide (Lys-Gly) (interchain with G-Cter in ubiquitin) linkage. Arg-238 and Thr-263 together coordinate 2',3'-cGAMP. 2',3'-cUAMP is bound by residues Arg-238 and Thr-263. Residues 238 to 241 and Thr-263 each bind 3',3'-c-di-GMP; that span reads RVYT. The C-terminal tail (CTT) stretch occupies residues 339 to 378; that stretch reads EVTMGSTETSVMPGSSVLSQEPELLISGLEKPLPLRSDVF. Position 354 is a phosphoserine (Ser-354). Phosphoserine; by TBK1 is present on residues Ser-357 and Ser-365. The pLxIS motif motif lies at 362 to 365; the sequence is LLIS.

This sequence belongs to the STING family. Homodimer; forms a homodimer in absence of cyclic nucleotide (c-di-GMP or cGAMP); 'Lys-63'-linked ubiquitination at Lys-150 is required for homodimerization. Homotetramer; in presence of cyclic nucleotide (c-di-GMP or cGAMP), forms tetramers and higher-order oligomers through side-by-side packing. Interacts (when phosphorylated) with IRF3; following activation and phosphorylation on the pLxIS motif by TBK1, recruits IRF3. Interacts with RIGI, MAVS and SSR2. Interacts with RNF5 and TRIM56. Interacts with TBK1; when homodimer, leading to subsequent production of IFN-beta. Interacts with IFIT1 and IFIT2. Interacts with TRIM29; this interaction induces STING1 ubiquitination and subsequent degradation. Associates with the MHC-II complex. Interacts with STEEP1; interaction takes place upon cGAMP-activation and STING1 phosphorylation by MAP3K7/TAK1 and promotes STING1 translocation to COPII vesicles. Interacts with SEC24A, SEC24B and SEC24C; promoting translocation to COPII vesicles. Interacts (when ubiquitinated) with SQSTM1; leading to relocalization to autophagosomes. Interacts with SURF4. Interacts with HNRNPA2B1. Interacts with ZDHHC1; ZDHHC1 constitutively interacts with STING1 and in presence of DNA viruses activates it by promoting its cGAMP-induced oligomerization and the recruitment of downstream signaling components. Interacts with ZDHHC11; in presence of DNA viruses promotes the recruitment of IRF3 to STING1. Interacts with TOMM70. Interacts with TAB1; promoting recruitment of TAB1 to the endoplasmic reticulum membrane and subsequent activation of MAP3K7/TAK1. Interacts (via transmembrane domain) with TMEM203. Interacts with DDX41. Phosphorylation by TBK1 leads to activation and production of IFN-beta. Following cyclic nucleotide (c-di-GMP or cGAMP)-binding, activation and translocation from the endoplasmic reticulum, STING1 is phosphorylated by TBK1 at Ser-365 in the pLxIS motif. The phosphorylated pLxIS motif constitutes an IRF3-binding motif, leading to recruitment of the transcription factor IRF3 to induce type-I interferons and other cytokines. Phosphorylated on tyrosine residues upon MHC-II aggregation. Dephosphorylation by PPP6C leads to inactivation and decreased production of IFN-beta. Phosphorylation at Ser-357 is also required to activate IRF3. Phosphorylation at Ser-354 by MAP3K7/TAK1 facilitates its interaction with STEEP1, promoting STING1 translocation to COPII vesicles. In terms of processing, ubiquitinated. Ubiquitinated via 'Lys-63'-linked ubiquitin chains in response to double-stranded DNA treatment, leading to relocalization to autophagosomes and subsequent degradation; this process is dependent on SQSTM1. 'Lys-63'-linked ubiquitination mediated by TRIM56 at Lys-150 promotes homodimerization and recruitment of the antiviral kinase TBK1 and subsequent production of IFN-beta. 'Lys-48'-linked polyubiquitination at Lys-150 occurring after viral infection is mediated by RNF5 and leads to proteasomal degradation. 'Lys-11'-linked polyubiquitination at Lys-150 by RNF26 leads to stabilize STING1: it protects STING1 from RNF5-mediated 'Lys-48'-linked polyubiquitination. 'Lys-33'-linked and 'Lys-48'-linked deubiquitinated by USP20; leading to its stabilization and promotion of innate antiviral response. 'Lys-48'-linked deubiquitinated by USP44; leading to its stabilization and promotion of innate antiviral response. 'Lys-63'-linked deubiquitinated by USP49; leading to inhibition of the subsequent recruitment of TBK1 to the signaling complex. 'Lys-63'-linked ubiquitination mediated by RNF39 promotes the activation of the cGAS-STING pathway. Post-translationally, palmitoylation takes place in the Golgi apparatus and creates a platform for the recruitment of TBK1.

It localises to the endoplasmic reticulum membrane. Its subcellular location is the cytoplasm. The protein localises to the perinuclear region. It is found in the endoplasmic reticulum-Golgi intermediate compartment membrane. The protein resides in the golgi apparatus membrane. It localises to the cytoplasmic vesicle. Its subcellular location is the autophagosome membrane. The protein localises to the mitochondrion outer membrane. It is found in the cell membrane. It catalyses the reaction H(+)(in) = H(+)(out). In terms of biological role, facilitator of innate immune signaling that acts as a sensor of cytosolic DNA from bacteria and viruses and promotes the production of type I interferon (IFN-alpha and IFN-beta). Innate immune response is triggered in response to non-CpG double-stranded DNA from viruses and bacteria delivered to the cytoplasm. Acts by binding cyclic dinucleotides: recognizes and binds cyclic di-GMP (c-di-GMP), a second messenger produced by bacteria, cyclic UMP-AMP (2',3'-cUAMP), and cyclic GMP-AMP (cGAMP), a messenger produced by CGAS in response to DNA virus in the cytosol. Upon binding to c-di-GMP or cGAMP, STING oligomerizes, translocates from the endoplasmic reticulum and is phosphorylated by TBK1 on the pLxIS motif, leading to recruitment and subsequent activation of the transcription factor IRF3 to induce expression of type I interferon and exert a potent anti-viral state. Exhibits 2',3' phosphodiester linkage-specific ligand recognition: can bind both 2'-3' linked cGAMP (2'-3'-cGAMP) and 3'-3' linked cGAMP but is preferentially activated by 2'-3' linked cGAMP. The preference for 2'-3'-cGAMP, compared to other linkage isomers is probably due to the ligand itself, whichs adopts an organized free-ligand conformation that resembles the STING1-bound conformation and pays low energy costs in changing into the active conformation. In addition to promote the production of type I interferons, plays a direct role in autophagy. Following cGAMP-binding, STING1 buds from the endoplasmic reticulum into COPII vesicles, which then form the endoplasmic reticulum-Golgi intermediate compartment (ERGIC). The ERGIC serves as the membrane source for WIPI2 recruitment and LC3 lipidation, leading to formation of autophagosomes that target cytosolic DNA or DNA viruses for degradation by the lysosome. Promotes autophagy by acting as a proton channel that directs proton efflux from the Golgi to facilitate MAP1LC3B/LC3B lipidation. The autophagy- and interferon-inducing activities can be uncoupled and autophagy induction is independent of TBK1 phosphorylation. Autophagy is also triggered upon infection by bacteria: following c-di-GMP-binding, which is produced by live Gram-positive bacteria, promotes reticulophagy. May be involved in translocon function, the translocon possibly being able to influence the induction of type I interferons. May be involved in transduction of apoptotic signals via its association with the major histocompatibility complex class II (MHC-II). The chain is Stimulator of interferon genes protein from Bos taurus (Bovine).